Here is a 645-residue protein sequence, read N- to C-terminus: Mediator of RNA polymerase II transcription subunit 17 (645 aa).

It belongs to the Mediator complex subunit 17 family. Component of the Mediator complex.

The protein resides in the nucleus. Functionally, component of the Mediator complex, a coactivator involved in the regulated transcription of nearly all RNA polymerase II-dependent genes. Mediator functions as a bridge to convey information from gene-specific regulatory proteins to the basal RNA polymerase II transcription machinery. Mediator is recruited to promoters by direct interactions with regulatory proteins and serves as a scaffold for the assembly of a functional preinitiation complex with RNA polymerase II and the general transcription factors. This chain is Mediator of RNA polymerase II transcription subunit 17 (MED17), found in Aedes aegypti (Yellowfever mosquito).